The chain runs to 126 residues: UPF0102 protein HD_0802 (126 aa).

Belongs to the UPF0102 family.

This chain is UPF0102 protein HD_0802, found in Haemophilus ducreyi (strain 35000HP / ATCC 700724).